Here is a 310-residue protein sequence, read N- to C-terminus: 5-oxoprolinase subunit C (310 aa).

This sequence belongs to the PxpC family. In terms of assembly, forms a complex composed of PxpA, PxpB and PxpC.

It catalyses the reaction 5-oxo-L-proline + ATP + 2 H2O = L-glutamate + ADP + phosphate + H(+). In terms of biological role, catalyzes the cleavage of 5-oxoproline to form L-glutamate coupled to the hydrolysis of ATP to ADP and inorganic phosphate. This is 5-oxoprolinase subunit C from Escherichia coli (strain K12).